We begin with the raw amino-acid sequence, 157 residues long: 2-C-methyl-D-erythritol 2,4-cyclodiphosphate synthase (157 aa).

A divalent metal cation-binding residues include D8, H10, and H42. 8–10 lines the 4-CDP-2-C-methyl-D-erythritol 2-phosphate pocket; sequence DVH. 4-CDP-2-C-methyl-D-erythritol 2-phosphate-binding positions include 56–58, 132–135, F139, and R142; these read DIG and STSE.

This sequence belongs to the IspF family. In terms of assembly, homotrimer. A divalent metal cation serves as cofactor.

The catalysed reaction is 4-CDP-2-C-methyl-D-erythritol 2-phosphate = 2-C-methyl-D-erythritol 2,4-cyclic diphosphate + CMP. Its pathway is isoprenoid biosynthesis; isopentenyl diphosphate biosynthesis via DXP pathway; isopentenyl diphosphate from 1-deoxy-D-xylulose 5-phosphate: step 4/6. Functionally, involved in the biosynthesis of isopentenyl diphosphate (IPP) and dimethylallyl diphosphate (DMAPP), two major building blocks of isoprenoid compounds. Catalyzes the conversion of 4-diphosphocytidyl-2-C-methyl-D-erythritol 2-phosphate (CDP-ME2P) to 2-C-methyl-D-erythritol 2,4-cyclodiphosphate (ME-CPP) with a corresponding release of cytidine 5-monophosphate (CMP). The sequence is that of 2-C-methyl-D-erythritol 2,4-cyclodiphosphate synthase from Dehalococcoides mccartyi (strain CBDB1).